A 138-amino-acid chain; its full sequence is Putative nickel-responsive regulator (138 aa).

Ni(2+) contacts are provided by H76, H87, H89, and C95.

It belongs to the transcriptional regulatory CopG/NikR family. Ni(2+) serves as cofactor.

Its function is as follows. Transcriptional regulator. This Pseudomonas putida (strain ATCC 47054 / DSM 6125 / CFBP 8728 / NCIMB 11950 / KT2440) protein is Putative nickel-responsive regulator.